The sequence spans 289 residues: 26S proteasome non-ATPase regulatory subunit 8 (289 aa).

The residue at position 45 (serine 45) is a Phosphoserine. One can recognise a PCI domain in the interval 101–270 (PSFERYMAQL…QQKPEDTTIP (170 aa)). Lysine 236 is covalently cross-linked (Glycyl lysine isopeptide (Lys-Gly) (interchain with G-Cter in SUMO2)).

Belongs to the proteasome subunit S14 family. Component of the 19S proteasome regulatory particle complex. The 26S proteasome consists of a 20S core particle (CP) and two 19S regulatory subunits (RP). The regulatory particle is made of a lid composed of 9 subunits including PSMD8, a base containing 6 ATPases and few additional components. Interacts with DDI2. Interacts with TASOR.

Functionally, component of the 26S proteasome, a multiprotein complex involved in the ATP-dependent degradation of ubiquitinated proteins. This complex plays a key role in the maintenance of protein homeostasis by removing misfolded or damaged proteins, which could impair cellular functions, and by removing proteins whose functions are no longer required. Therefore, the proteasome participates in numerous cellular processes, including cell cycle progression, apoptosis, or DNA damage repair. This Pongo abelii (Sumatran orangutan) protein is 26S proteasome non-ATPase regulatory subunit 8 (PSMD8).